The following is a 227-amino-acid chain: ATP-dependent dethiobiotin synthetase BioD (227 aa).

Position 13–18 (N13–I18) interacts with ATP. Position 17 (T17) interacts with Mg(2+). The active site involves K38. S42 contributes to the substrate binding site. ATP contacts are provided by residues D55, E117–G120, N177–H178, P206–I208, and N213. Residues D55 and E117 each coordinate Mg(2+).

The protein belongs to the dethiobiotin synthetase family. In terms of assembly, homodimer. It depends on Mg(2+) as a cofactor.

The protein localises to the cytoplasm. It carries out the reaction (7R,8S)-7,8-diammoniononanoate + CO2 + ATP = (4R,5S)-dethiobiotin + ADP + phosphate + 3 H(+). The protein operates within cofactor biosynthesis; biotin biosynthesis; biotin from 7,8-diaminononanoate: step 1/2. Catalyzes a mechanistically unusual reaction, the ATP-dependent insertion of CO2 between the N7 and N8 nitrogen atoms of 7,8-diaminopelargonic acid (DAPA, also called 7,8-diammoniononanoate) to form a ureido ring. The chain is ATP-dependent dethiobiotin synthetase BioD from Wigglesworthia glossinidia brevipalpis.